Consider the following 144-residue polypeptide: Necrosis-inducing secreted protein 1 (144 aa).

The signal sequence occupies residues 1–19 (MQFRASIAAAAGLFALANA). Residues asparagine 88, asparagine 126, and asparagine 133 are each glycosylated (N-linked (GlcNAc...) asparagine). A BAK1/SERK3-binding region spans residues 103–132 (QYVVAAGLYSLYGASSSPTLSHYNVTVTVG).

Belongs to the NIS1 effector family.

It is found in the secreted. Its subcellular location is the host cytoplasm. Functionally, secreted effector that induces necrotic lesions in Nicotiana benthamiana. Interacts with the host receptor-like kinases (RLKs) BAK1/SERK3 and BKK1/SERK4, inhibits their kinase activity and suppresses INF1-induced pathogen-associated molecular pattern (PAMP)-triggered immunity (PTI) in N.benthamiana. Also interacts with the host receptor-like cytoplasmic kinase (RLCK) BIK1 and inhibits its kinase activity, thereby inhibiting PAMP-induced ROS generation. In PTI, phosphorylation relaying by RLKs and RLCKs is critical for the initiation of downstream signaling. This is Necrosis-inducing secreted protein 1 from Colletotrichum higginsianum (strain IMI 349063) (Crucifer anthracnose fungus).